Consider the following 742-residue polypeptide: Catalase-peroxidase (742 aa).

Positions 1-43 are disordered; sequence MSDSCPVAHEGNTQSTSESENPVIPSPTPAANRPRNNRDWWPN. Over residues 11 to 20 the composition is skewed to polar residues; the sequence is GNTQSTSESE. The segment at residues 109–231 is a cross-link (tryptophyl-tyrosyl-methioninium (Trp-Tyr) (with M-257)); that stretch reads WHAAGTYRIA…LGAVQMGLIY (123 aa). Residue histidine 110 is the Proton acceptor of the active site. A cross-link (tryptophyl-tyrosyl-methioninium (Tyr-Met) (with W-109)) is located at residues 231–257; that stretch reads YVNPEGPNGQPDPLAAARDIRETFSRM. Position 272 (histidine 272) interacts with heme b.

This sequence belongs to the peroxidase family. Peroxidase/catalase subfamily. As to quaternary structure, homodimer or homotetramer. Heme b is required as a cofactor. Post-translationally, formation of the three residue Trp-Tyr-Met cross-link is important for the catalase, but not the peroxidase activity of the enzyme.

The enzyme catalyses H2O2 + AH2 = A + 2 H2O. It carries out the reaction 2 H2O2 = O2 + 2 H2O. Its function is as follows. Bifunctional enzyme with both catalase and broad-spectrum peroxidase activity. This Rhodococcus jostii (strain RHA1) protein is Catalase-peroxidase.